The chain runs to 125 residues: Large ribosomal subunit protein bL19 (125 aa).

This sequence belongs to the bacterial ribosomal protein bL19 family.

Functionally, this protein is located at the 30S-50S ribosomal subunit interface and may play a role in the structure and function of the aminoacyl-tRNA binding site. The chain is Large ribosomal subunit protein bL19 from Wolbachia pipientis wMel.